Consider the following 134-residue polypeptide: UPF0756 membrane protein YeaL (134 aa).

4 consecutive transmembrane segments (helical) span residues 14 to 34 (ALGF…LIIV), 51 to 71 (LTVG…SGTL), 86 to 106 (LVAI…ITLM), and 110 to 130 (PQLV…FRGV).

It belongs to the UPF0756 family.

It localises to the cell membrane. The protein is UPF0756 membrane protein YeaL of Salmonella typhimurium (strain LT2 / SGSC1412 / ATCC 700720).